The chain runs to 170 residues: Cyclic pyranopterin monophosphate synthase (170 aa).

Substrate-binding positions include 75–77 (MCH) and 115–116 (ME). Residue Asp130 is part of the active site.

The protein belongs to the MoaC family. As to quaternary structure, homohexamer; trimer of dimers.

The enzyme catalyses (8S)-3',8-cyclo-7,8-dihydroguanosine 5'-triphosphate = cyclic pyranopterin phosphate + diphosphate. It functions in the pathway cofactor biosynthesis; molybdopterin biosynthesis. In terms of biological role, catalyzes the conversion of (8S)-3',8-cyclo-7,8-dihydroguanosine 5'-triphosphate to cyclic pyranopterin monophosphate (cPMP). The polypeptide is Cyclic pyranopterin monophosphate synthase (Bacillus subtilis (strain 168)).